A 537-amino-acid chain; its full sequence is CTP synthase (537 aa).

Positions 1–268 are amidoligase domain; it reads MPFKCIFLTG…STFITEKLGL (268 aa). S14 contacts CTP. UTP is bound at residue S14. Residue 15–20 participates in ATP binding; the sequence is SLGKGL. Position 55 (Y55) interacts with L-glutamine. Residue D72 participates in ATP binding. Mg(2+) contacts are provided by D72 and E142. CTP is bound by residues 149 to 151, 188 to 193, and K224; these read DIE and KTKPTQ. Residues 188-193 and K224 contribute to the UTP site; that span reads KTKPTQ. In terms of domain architecture, Glutamine amidotransferase type-1 spans 294–533; the sequence is RIGLVGKYVQ…IQAALLYSKN (240 aa). L-glutamine is bound at residue G353. Residue C380 is the Nucleophile; for glutamine hydrolysis of the active site. L-glutamine-binding positions include 381-384, E404, and R461; that span reads LGMQ. Catalysis depends on residues H506 and E508.

The protein belongs to the CTP synthase family. In terms of assembly, homotetramer.

It catalyses the reaction UTP + L-glutamine + ATP + H2O = CTP + L-glutamate + ADP + phosphate + 2 H(+). The enzyme catalyses L-glutamine + H2O = L-glutamate + NH4(+). The catalysed reaction is UTP + NH4(+) + ATP = CTP + ADP + phosphate + 2 H(+). The protein operates within pyrimidine metabolism; CTP biosynthesis via de novo pathway; CTP from UDP: step 2/2. Its activity is regulated as follows. Allosterically activated by GTP, when glutamine is the substrate; GTP has no effect on the reaction when ammonia is the substrate. The allosteric effector GTP functions by stabilizing the protein conformation that binds the tetrahedral intermediate(s) formed during glutamine hydrolysis. Inhibited by the product CTP, via allosteric rather than competitive inhibition. Functionally, catalyzes the ATP-dependent amination of UTP to CTP with either L-glutamine or ammonia as the source of nitrogen. Regulates intracellular CTP levels through interactions with the four ribonucleotide triphosphates. The sequence is that of CTP synthase from Chlamydia caviae (strain ATCC VR-813 / DSM 19441 / 03DC25 / GPIC) (Chlamydophila caviae).